The primary structure comprises 190 residues: Mitochondrial inner membrane protease subunit 1 (190 aa).

Catalysis depends on residues Ser40 and Lys84.

It belongs to the peptidase S26 family. IMP1 subfamily. In terms of assembly, component of the mitochondrial inner membrane peptidase (IMP) complex which at least consists of IMP1, IMP2 and SOM1.

The protein resides in the mitochondrion inner membrane. Catalytic component of the mitochondrial inner membrane peptidase (IMP) complex. IMP catalyzes the removal of signal peptides required for the targeting of proteins from the mitochondrial matrix, across the inner membrane, into the inter-membrane space. The two catalytic IMP subunits seem to have non-overlapping substrate specificities. IMP1 substrates include nuclear encoded CYB2, mitochondrially encoded COX2, NADH-cytochrome b5 reductase and GUT2. The sequence is that of Mitochondrial inner membrane protease subunit 1 (IMP1) from Saccharomyces cerevisiae (strain ATCC 204508 / S288c) (Baker's yeast).